The chain runs to 90 residues: Large ribosomal subunit protein uL23c (90 aa).

Belongs to the universal ribosomal protein uL23 family. Part of the 50S ribosomal subunit.

The protein localises to the plastid. It is found in the chloroplast. In terms of biological role, binds to 23S rRNA. The polypeptide is Large ribosomal subunit protein uL23c (rpl23) (Oltmannsiellopsis viridis (Marine flagellate)).